Reading from the N-terminus, the 267-residue chain is Hydroxyethylthiazole kinase (267 aa).

Residue Met-44 coordinates substrate. Residues Arg-120 and Thr-165 each coordinate ATP. Gly-192 is a substrate binding site.

This sequence belongs to the Thz kinase family. Requires Mg(2+) as cofactor.

The enzyme catalyses 5-(2-hydroxyethyl)-4-methylthiazole + ATP = 4-methyl-5-(2-phosphooxyethyl)-thiazole + ADP + H(+). It functions in the pathway cofactor biosynthesis; thiamine diphosphate biosynthesis; 4-methyl-5-(2-phosphoethyl)-thiazole from 5-(2-hydroxyethyl)-4-methylthiazole: step 1/1. Functionally, catalyzes the phosphorylation of the hydroxyl group of 4-methyl-5-beta-hydroxyethylthiazole (THZ). This chain is Hydroxyethylthiazole kinase, found in Carboxydothermus hydrogenoformans (strain ATCC BAA-161 / DSM 6008 / Z-2901).